Here is a 126-residue protein sequence, read N- to C-terminus: MSDTQHQVNVRVDTRYLPEQSAPEQNRFAFAYTVTIENQGEVPAQLLSRHWIITDGDGRTQEVRGAGVVGEQPLIAPGAQHTYTSGTVLATRVGSMRGSYQMLGSDGIAFDAAIPVFRLAVPGALH.

Positions 2 to 126 (SDTQHQVNVR…FRLAVPGALH (125 aa)) constitute an ApaG domain.

The polypeptide is Protein ApaG (Pseudomonas aeruginosa (strain LESB58)).